We begin with the raw amino-acid sequence, 128 residues long: Small ribosomal subunit protein uS9 (128 aa).

As to quaternary structure, part of the 30S ribosomal subunit. Contacts proteins S7 and S10.

In terms of biological role, part of the top of the head of the 30S subunit. The C-terminal region penetrates the head emerging in the P-site where it contacts tRNA. This is Small ribosomal subunit protein uS9 (rpsI) from Thermus thermophilus (strain ATCC 27634 / DSM 579 / HB8).